Consider the following 92-residue polypeptide: Alpha-conotoxin FrXXA 2 (92 aa).

An N-terminal signal peptide occupies residues 1–24 (MPKLEMMLLVLLILPLPYFDAAGG). Positions 25 to 45 (QAVQGDGHGDGMDRYLQRDDR) are excised as a propeptide. 4 cysteine pairs are disulfide-bonded: cysteine 63–cysteine 72, cysteine 68–cysteine 80, cysteine 73–cysteine 90, and cysteine 78–cysteine 92.

The protein belongs to the conotoxin D superfamily. As to quaternary structure, homodimer; disulfide-linked. The homodimer contains 10 disulfide bonds. Expressed by the venom duct.

Its subcellular location is the secreted. In terms of biological role, alpha-conotoxins act on postsynaptic membranes, they bind to the nicotinic acetylcholine receptors (nAChR) and thus inhibit them. Through its two C-terminal domains, this homodimeric protein would bind to two nAChR allosteric sites, located outside the nAChR C-loop of the principal binding face and at the adjacent binding interface in a clockwise direction. Component 4b which seems to correspond to this toxin blocks both neuronal and muscular subtypes: human alpha-7/CHRNA7 (IC(50)=125 nM), human alpha-3-beta-2 (CHRNA3-CHRNB2) (IC(50)=282 nM), human alpha-4-beta-2 (CHRNA4-CHRNB2) (IC(50)=697 nM), mouse adult muscular subtype alpha-1-beta-1-delta-epsilon (CHRNA1-CHRNB1-CHRND-CHRNE) (IC(50)=351 nM), and mouse fetal muscular subtype alpha-1-beta-1-gamma-delta (CHRNA1-CHRNB1-CHRNG-CHRND) (IC(50)=447 nM). It shows different dissociation rates towards the different subtypes, with a very slow rate towards alpha-7 subtype (almost irreversible), followed by the adult muscular subtype, the fetal muscular subtype, alpha-3-beta-2 and alpha-4-beta-2 (almost entirely reversible within a few minutes of washing). In Conus fergusoni (Ferguson's cone), this protein is Alpha-conotoxin FrXXA 2.